The sequence spans 114 residues: Iron-sulfur cluster insertion protein ErpA (114 aa).

Cysteine 42, cysteine 106, and cysteine 108 together coordinate iron-sulfur cluster.

It belongs to the HesB/IscA family. As to quaternary structure, homodimer. It depends on iron-sulfur cluster as a cofactor.

Functionally, required for insertion of 4Fe-4S clusters for at least IspG. This Salmonella typhi protein is Iron-sulfur cluster insertion protein ErpA.